Here is a 206-residue protein sequence, read N- to C-terminus: LexA repressor (206 aa).

Residues 28-48 (VREIGQAVGLASSSTVHGHLS) constitute a DNA-binding region (H-T-H motif). Active-site for autocatalytic cleavage activity residues include serine 128 and lysine 166.

This sequence belongs to the peptidase S24 family. In terms of assembly, homodimer.

It carries out the reaction Hydrolysis of Ala-|-Gly bond in repressor LexA.. Its function is as follows. Represses a number of genes involved in the response to DNA damage (SOS response), including recA and lexA. In the presence of single-stranded DNA, RecA interacts with LexA causing an autocatalytic cleavage which disrupts the DNA-binding part of LexA, leading to derepression of the SOS regulon and eventually DNA repair. The chain is LexA repressor from Bacillus cytotoxicus (strain DSM 22905 / CIP 110041 / 391-98 / NVH 391-98).